We begin with the raw amino-acid sequence, 507 residues long: TOM1-like protein 2 (507 aa).

The region spanning 20–152 (ATDGSLQSED…ELKRRGIEFP (133 aa)) is the VHS domain. S160 is subject to Phosphoserine. T164 carries the post-translational modification Phosphothreonine. Residues 164–200 (TPQRSVPEMDPAATIPRSQTQPRTTAGTYSSPPPASY) form a disordered region. The GAT domain maps to 219-307 (EQIARLRSEL…VFLRYERFER (89 aa)). The Clathrin-binding motif lies at 329–334 (NLIDLG). Positions 466-507 (ERAKAAETVPDLPSPPTEAPAPASNTSTRKKPERSDDALFAL) are disordered. Basic and acidic residues predominate over residues 498–507 (ERSDDALFAL).

The protein belongs to the TOM1 family. As to quaternary structure, interacts with clathrin, SRC and TOLLIP. Interacts with MYO6. In terms of tissue distribution, ubiquitously expressed. Splicing pattern displays tissue specific variation.

Acts as a MYO6/Myosin VI adapter protein that targets myosin VI to endocytic structures. May also play a role in recruiting clathrin to endosomes. May regulate growth factor-induced mitogenic signaling. This is TOM1-like protein 2 (Tom1l2) from Mus musculus (Mouse).